The following is a 430-amino-acid chain: UDP-N-acetylglucosamine 1-carboxyvinyltransferase (430 aa).

22–23 (KN) lines the phosphoenolpyruvate pocket. Arg102 lines the UDP-N-acetyl-alpha-D-glucosamine pocket. Cys126 serves as the catalytic Proton donor. Cys126 bears the 2-(S-cysteinyl)pyruvic acid O-phosphothioketal mark. Residues 131-135 (RPVDL), 172-175 (KVSV), Asp317, and Ile339 each bind UDP-N-acetyl-alpha-D-glucosamine.

The protein belongs to the EPSP synthase family. MurA subfamily.

It localises to the cytoplasm. It carries out the reaction phosphoenolpyruvate + UDP-N-acetyl-alpha-D-glucosamine = UDP-N-acetyl-3-O-(1-carboxyvinyl)-alpha-D-glucosamine + phosphate. It functions in the pathway cell wall biogenesis; peptidoglycan biosynthesis. Its function is as follows. Cell wall formation. Adds enolpyruvyl to UDP-N-acetylglucosamine. This Sinorhizobium medicae (strain WSM419) (Ensifer medicae) protein is UDP-N-acetylglucosamine 1-carboxyvinyltransferase.